The sequence spans 333 residues: Adenosine deaminase (333 aa).

Zn(2+) contacts are provided by H12 and H14. Substrate contacts are provided by H14, D16, and G170. Residue H197 participates in Zn(2+) binding. Residue E200 is the Proton donor of the active site. D278 is a binding site for Zn(2+). A substrate-binding site is contributed by D279.

It belongs to the metallo-dependent hydrolases superfamily. Adenosine and AMP deaminases family. Adenosine deaminase subfamily. Requires Zn(2+) as cofactor.

The enzyme catalyses adenosine + H2O + H(+) = inosine + NH4(+). It catalyses the reaction 2'-deoxyadenosine + H2O + H(+) = 2'-deoxyinosine + NH4(+). In terms of biological role, catalyzes the hydrolytic deamination of adenosine and 2-deoxyadenosine. The chain is Adenosine deaminase from Salmonella dublin (strain CT_02021853).